The sequence spans 357 residues: MSNTNFFNDDWLELQRKYWDNWTDMSRKAMGLDSASSSATTPWEAAIDQWWKAMAPAAPDLSRSFMEKMMEQGKNFFRLADTFAKRADEGNAGNGLELWTKTLEDMQKRFSGSLDDGGNTMQRLMSFWELPLDNWQRMMSSMSPMPGDMLRNMPHEQFKDSLDRALSAPGLGYTREEQSQYQELMRSAMEYQAALQEYTNVYTKLGMKSVEHMGSYIQGVIDSGKTIDSARALYDNWVACCEGAYADEVATPEYARIHGRLVNAQMALKKRMSILVDENLGALNMPTRSELRTLQDRLQETRRENKALRHSLHSLERRVAALAGEEPATKPATALRSPAPAAKAPARRRTTKTNPAD.

A disordered region spans residues 320–357 (AALAGEEPATKPATALRSPAPAAKAPARRRTTKTNPAD). Positions 331-344 (PATALRSPAPAAKA) are enriched in low complexity.

The protein belongs to the PHA/PHB synthase family. Type III PhaE subfamily. In terms of assembly, a large complex of PhaC and PhaE; the ratio of the subunits has been estimated to be from 1:1 to 4:1, with more PhaE than PhaC.

It localises to the cytoplasm. Its pathway is biopolymer metabolism; poly-(R)-3-hydroxybutanoate biosynthesis. Its function is as follows. Polymerizes D(-)-3-hydroxybutyryl-CoA to create polyhydroxybutyrate (PHB) which consists of thousands of hydroxybutyrate molecules linked end to end. This subunit has no catalytic activity but enhances the activity of PhaC, the catalytic subunit, 100-fold. The sequence is that of Poly(3-hydroxyalkanoate) polymerase subunit PhaE from Allochromatium vinosum (strain ATCC 17899 / DSM 180 / NBRC 103801 / NCIMB 10441 / D) (Chromatium vinosum).